A 263-amino-acid polypeptide reads, in one-letter code: MKEKKNKKFALGVEYDGSYYHGWQSQKGLSTIQSEIEKALSKIANHQVNVICAGRTDSGVHSIGQVIHFTSISFRSDFSWIVGVNSYLSKNISVKWIKEVSENFNARYSAISRSYRYIIYNHKCRSAIFRNRSNHVYKELNVDKMYFEAQSLLGEHDFSSFRSSGCQSRSPFRTITDLNIRRLKNLVIIDITANSFLYHMVRNIVGSLIQINDNTKKNYIKKILDKKDRNYAGPTVSARGLYLFFVKYPMCFNLPIFKDDFII.

Asp57 serves as the catalytic Nucleophile. Residue Tyr115 participates in substrate binding.

This sequence belongs to the tRNA pseudouridine synthase TruA family. As to quaternary structure, homodimer.

The catalysed reaction is uridine(38/39/40) in tRNA = pseudouridine(38/39/40) in tRNA. Formation of pseudouridine at positions 38, 39 and 40 in the anticodon stem and loop of transfer RNAs. This chain is tRNA pseudouridine synthase A, found in Buchnera aphidicola subsp. Schizaphis graminum (strain Sg).